Consider the following 311-residue polypeptide: Porphobilinogen deaminase (311 aa).

C242 is modified (S-(dipyrrolylmethanemethyl)cysteine).

This sequence belongs to the HMBS family. As to quaternary structure, monomer. Dipyrromethane serves as cofactor.

The enzyme catalyses 4 porphobilinogen + H2O = hydroxymethylbilane + 4 NH4(+). It functions in the pathway porphyrin-containing compound metabolism; protoporphyrin-IX biosynthesis; coproporphyrinogen-III from 5-aminolevulinate: step 2/4. Tetrapolymerization of the monopyrrole PBG into the hydroxymethylbilane pre-uroporphyrinogen in several discrete steps. The sequence is that of Porphobilinogen deaminase (hemC) from Vibrio cholerae serotype O1 (strain ATCC 39315 / El Tor Inaba N16961).